The sequence spans 214 residues: Glycoprotein Q2 (214 aa).

The N-terminal stretch at 1 to 19 is a signal peptide; that stretch reads MHFLVVYILIHFHAYRGMA. 4 N-linked (GlcNAc...) asparagine; by host glycosylation sites follow: Asn41, Asn74, Asn110, and Asn210.

In terms of assembly, interacts with isoform gQ1. The heterodimer gQ1-gQ2 associates with the glycoprotein complex gH-gL to form a tetrameric complex. The gH/gL/gQ1/gQ2 complex binds to human receptor CD46. Glycosylated by host.

The protein resides in the virion membrane. It is found in the host endoplasmic reticulum-Golgi intermediate compartment. In terms of biological role, plays a role in virus entry by participating in host receptor binding at the cell surface. This is Glycoprotein Q2 from Human herpesvirus 6A (strain Uganda-1102) (HHV-6 variant A).